A 558-amino-acid chain; its full sequence is Probable beta-glucosidase btgE (558 aa).

Positions 1 to 18 (MKAAILATAAALTGSALA) are cleaved as a signal peptide. Disordered regions lie at residues 64–105 (STPS…PETP) and 251–305 (LPSS…QMGM). Low complexity-rich tracts occupy residues 76–105 (PETT…PETP) and 252–292 (PSSS…SSSA). Polar residues predominate over residues 293–305 (EVPQTTGSGQMGM). The active-site Proton donor is Glu-399. Residue Glu-495 is the Nucleophile of the active site.

It belongs to the glycosyl hydrolase 17 family.

The protein localises to the secreted. Its subcellular location is the cell wall. It catalyses the reaction Hydrolysis of terminal, non-reducing beta-D-glucosyl residues with release of beta-D-glucose.. Its pathway is glycan metabolism; cellulose degradation. Its function is as follows. Beta-glucosidases are one of a number of cellulolytic enzymes involved in the degradation of cellulosic biomass. Catalyzes the last step releasing glucose from the inhibitory cellobiose. The polypeptide is Probable beta-glucosidase btgE (btgE) (Aspergillus terreus (strain NIH 2624 / FGSC A1156)).